The sequence spans 277 residues: MKKPVDFFAMKENGEKITMITAYDYPSAKNVEQAEADMILVGDSLGMVVLGYDSTVPVTMNDMIHHTKAVKRGAPNTFVVTDMPFMTYHGSVDETIQNARKIIQESGAHAVKLEGAGEVVNKIARLTEAGAPVVAHLGLTPQSVGLTGSYKVRAKSVQEAQELIDNALAVEAAGAIAIVLEAIPRQLAEKVTKALTIPTIGIGAGLETDGQVLVYHDIIGYGINRRAKFVKAYADIDETIEPALKNYVNDVKELAFPEVKHSFTMAEEDLKGLYGRE.

The Mg(2+) site is built by aspartate 43 and aspartate 82. 3-methyl-2-oxobutanoate is bound by residues aspartate 43–serine 44, aspartate 82, and lysine 112. Glutamate 114 is a binding site for Mg(2+). Glutamate 181 serves as the catalytic Proton acceptor.

The protein belongs to the PanB family. Homodecamer; pentamer of dimers. Requires Mg(2+) as cofactor.

Its subcellular location is the cytoplasm. The enzyme catalyses 3-methyl-2-oxobutanoate + (6R)-5,10-methylene-5,6,7,8-tetrahydrofolate + H2O = 2-dehydropantoate + (6S)-5,6,7,8-tetrahydrofolate. The protein operates within cofactor biosynthesis; (R)-pantothenate biosynthesis; (R)-pantoate from 3-methyl-2-oxobutanoate: step 1/2. Its function is as follows. Catalyzes the reversible reaction in which hydroxymethyl group from 5,10-methylenetetrahydrofolate is transferred onto alpha-ketoisovalerate to form ketopantoate. This chain is 3-methyl-2-oxobutanoate hydroxymethyltransferase, found in Listeria innocua serovar 6a (strain ATCC BAA-680 / CLIP 11262).